The primary structure comprises 104 residues: Complex III assembly factor LYRM7 (104 aa).

S60 is subject to Phosphoserine.

Belongs to the complex I LYR family. Interacts with UQCRFS1.

It localises to the mitochondrion matrix. Functionally, assembly factor required for Rieske Fe-S protein UQCRFS1 incorporation into the cytochrome b-c1 (CIII) complex. Functions as a chaperone, binding to this subunit within the mitochondrial matrix and stabilizing it prior to its translocation and insertion into the late CIII dimeric intermediate within the mitochondrial inner membrane. This is Complex III assembly factor LYRM7 (LYRM7) from Bos taurus (Bovine).